The following is a 341-amino-acid chain: L-threonine 3-dehydrogenase (341 aa).

Residue Cys38 coordinates Zn(2+). Catalysis depends on charge relay system residues Thr40 and His43. Zn(2+)-binding residues include His63, Glu64, Cys93, Cys96, Cys99, and Cys107. Residues Ile175, Asp195, Arg200, 262–264, and 286–287 contribute to the NAD(+) site; these read LGI and IY.

Belongs to the zinc-containing alcohol dehydrogenase family. As to quaternary structure, homotetramer. Zn(2+) is required as a cofactor.

The protein localises to the cytoplasm. It catalyses the reaction L-threonine + NAD(+) = (2S)-2-amino-3-oxobutanoate + NADH + H(+). Its pathway is amino-acid degradation; L-threonine degradation via oxydo-reductase pathway; glycine from L-threonine: step 1/2. Its function is as follows. Catalyzes the NAD(+)-dependent oxidation of L-threonine to 2-amino-3-ketobutyrate. This Shigella boydii serotype 4 (strain Sb227) protein is L-threonine 3-dehydrogenase.